Consider the following 407-residue polypeptide: Probable protein S-acyltransferase 9 (407 aa).

A run of 2 helical transmembrane segments spans residues 28–48 (WSIPFTFLLIITPVCFFSVFV) and 62–82 (GHVFLVAGVLFTVFVLILLFL). Positions 136-179 (KYCDTCMLYRPPRCSHCSICNNCVERFDHHCPWRNYRYFFMFVS) constitute a DHHC domain. The active-site S-palmitoyl cysteine intermediate is the cysteine 166. Helical transmembrane passes span 174–194 (FFMFVSSATILCIYIFSMSAL) and 217–237 (AVMLMIYCFISLWFVGGLTGF). Residues 300–407 (LATTWERPEE…RSYAAAEEGR (108 aa)) are disordered. The segment covering 346–356 (DTAHHKIDIDQ) has biased composition (basic and acidic residues).

This sequence belongs to the DHHC palmitoyltransferase family. Mainly expressed in seeds.

The protein localises to the cell membrane. It catalyses the reaction L-cysteinyl-[protein] + hexadecanoyl-CoA = S-hexadecanoyl-L-cysteinyl-[protein] + CoA. Palmitoyl acyltransferase. The protein is Probable protein S-acyltransferase 9 (PAT09) of Arabidopsis thaliana (Mouse-ear cress).